We begin with the raw amino-acid sequence, 177 residues long: Late embryogenesis abundant protein 1 (177 aa).

The segment at 1-177 is disordered; it reads MASHDQSYKA…DKDHFPTNRH (177 aa). A compositionally biased stretch (basic and acidic residues) spans 28–39; that stretch reads IEDKAQAAKEKA. Low complexity predominate over residues 40–89; sequence QQAAQTAKDKTSQTAQAAKEKTQQTAQAAKEKTQQTAQAAKDETQQTAQA. Tandem repeats lie at residues 53-63, 64-74, 75-85, and 86-96. Positions 53-96 are 4 X 11 AA approximate tandem repeats of T-A-Q-A-A-K-E-K-T-Q-Q; that stretch reads TAQAAKEKTQQTAQAAKEKTQQTAQAAKDETQQTAQAAKDKTQQ. Over residues 90 to 117 the composition is skewed to basic and acidic residues; sequence AKDKTQQTTEATKEKAQDTTGRAREKGS. Residues 119-142 show a composition bias toward polar residues; it reads MGQSTKETAQSGKDNSAGFLQQTG. Basic and acidic residues predominate over residues 164 to 177; the sequence is NDDKDKDHFPTNRH.

The protein belongs to the LEA type 4 family. In terms of tissue distribution, highest expression is found in seeds. No expression detected in adult tissues.

This is Late embryogenesis abundant protein 1 from Cicer arietinum (Chickpea).